A 407-amino-acid chain; its full sequence is tRNA pseudouridine synthase Pus10 (407 aa).

The active-site Nucleophile is aspartate 232. Residues tyrosine 300 and tyrosine 369 each coordinate substrate.

This sequence belongs to the pseudouridine synthase Pus10 family.

It carries out the reaction uridine(54) in tRNA = pseudouridine(54) in tRNA. It catalyses the reaction uridine(55) in tRNA = pseudouridine(55) in tRNA. In terms of biological role, responsible for synthesis of pseudouridine from uracil-54 and uracil-55 in the psi GC loop of transfer RNAs. This chain is tRNA pseudouridine synthase Pus10, found in Methanosphaera stadtmanae (strain ATCC 43021 / DSM 3091 / JCM 11832 / MCB-3).